Consider the following 147-residue polypeptide: Hemoglobin subunit beta (147 aa).

Val2 is subject to N-acetylvaline. The 145-residue stretch at 3-147 folds into the Globin domain; the sequence is HLTPDEKAAV…VANALAHKYH (145 aa). Position 13 is a phosphothreonine (Thr13). The residue at position 45 (Ser45) is a Phosphoserine. An N6-acetyllysine modification is found at Lys60. Residue His64 participates in heme b binding. An N6-acetyllysine modification is found at Lys83. His93 lines the heme b pocket. Residue Cys94 is modified to S-nitrosocysteine. Lys145 carries the post-translational modification N6-acetyllysine.

The protein belongs to the globin family. As to quaternary structure, heterotetramer of two alpha chains and two beta chains. In terms of tissue distribution, red blood cells.

Functionally, involved in oxygen transport from the lung to the various peripheral tissues. The protein is Hemoglobin subunit beta (HBB) of Colobus polykomos (Western black-and-white colobus monkey).